The sequence spans 268 residues: Bis(5'-nucleosyl)-tetraphosphatase, symmetrical (268 aa).

The protein belongs to the Ap4A hydrolase family.

It carries out the reaction P(1),P(4)-bis(5'-adenosyl) tetraphosphate + H2O = 2 ADP + 2 H(+). Functionally, hydrolyzes diadenosine 5',5'''-P1,P4-tetraphosphate to yield ADP. The polypeptide is Bis(5'-nucleosyl)-tetraphosphatase, symmetrical (Vibrio parahaemolyticus serotype O3:K6 (strain RIMD 2210633)).